The primary structure comprises 712 residues: TGF-beta-activated kinase 1 and MAP3K7-binding protein 3 (712 aa).

At alanine 2 the chain carries N-acetylalanine. In terms of domain architecture, CUE spans 8–51; it reads LDIQVLHDLRQRFPEIPEGVVSQCMLQNNNNLEACCRALSQESS. Serine 60, serine 101, and serine 103 each carry phosphoserine. 4 disordered regions span residues 141 to 189, 227 to 345, 369 to 447, and 475 to 509; these read FMNE…HIPR, PGSI…KQGS, TVEP…SPRV, and ERSA…SSGS. Residues 163–173 are compositionally biased toward polar residues; it reads MQTGMNPSAMQ. Composition is skewed to low complexity over residues 233 to 249 and 269 to 290; these read RQTS…QSTP and YPHQ…IPQS. Positions 322–332 are enriched in pro residues; that stretch reads PPSPSTTPPHP. 2 stretches are compositionally biased toward polar residues: residues 336–345 and 371–404; these read GPPSYQKQGS and EPSQ…TATT. Serine 385 carries the phosphoserine modification. A Phosphothreonine modification is found at threonine 404. Low complexity predominate over residues 405-417; that stretch reads PPSSSPSRGISSQ. Phosphoserine occurs at positions 409 and 492. Phosphoserine; by MAPKAPK2 and MAPKAPK3 is present on serine 506. Residues 517-559 adopt a coiled-coil conformation; sequence ALLLHQRARMERLAKQLKLEKEELERLKSEVNGMEHDLMQRRL. Residues 609-636 are disordered; the sequence is MNNFYDNIEPGPVVPPKPSKKDSSDPCT. Over residues 627-636 the composition is skewed to basic and acidic residues; sequence SKKDSSDPCT. Lysine 649 participates in a covalent cross-link: Glycyl lysine isopeptide (Lys-Gly) (interchain with G-Cter in ubiquitin). Residues 658–667 show a composition bias toward basic and acidic residues; the sequence is QAAAADEHRT. The interval 658-682 is disordered; sequence QAAAADEHRTGSTQSPRTQPRDEDY. Residues 682–712 form a RanBP2-type zinc finger; it reads YEGAPWNCDSCTFLNHPALNRCEQCEMPRYT. Cysteine 692 bears the (Microbial infection) S-methylcysteine mark.

Interacts with TAB1, TAB2, MAP3K7, TRAF2 and TRAF6. The minimal TAB3-containing complex (TAB1-MAP3K7-TAB3) appears not to contain TAB2. However, it seems sensible to consider that TAB2 may also join this complex and may act in a cooperative manner with TAB3. Interacts with DYNC2I2 (via the WD domains). Interacts with RBCK1. Binds 'Lys-63'-linked polyubiquitin chains. Interacts with TRIM5. Interacts with TRIM38 (via B30.2/SPRY domain), leading to its translocation to lysosomes and degradation. Interacts with ASB1. In terms of assembly, (Microbial infection) Interacts with M.tuberculosis PtpA, which blocks the NF-kappa-B signaling pathway. Post-translationally, ubiquitinated; following IL1 stimulation or TRAF6 overexpression. Ubiquitinated by AMFR via 'Lys-27'-linked polyubiquitination; leading to TAK1/MAP3K7 activation. In terms of processing, degraded in a lysosome-dependent manner following interaction with TRIM38. Phosphorylated at Ser-506 by MAPKAPK2 and MAPKAPK3 following IL1 treatment. Post-translationally, (Microbial infection) Methylated at Cys-692 by enteropathogenic E.coli protein NleE or S.flexneri protein OspZ: methylation disrupts zinc-binding and ability to bind 'Lys-63'-linked ubiquitin, leading to NF-kappa-B inactivation. Widely expressed. Constitutively overexpressed in certain tumor tissues. In terms of tissue distribution, major transcript. As to expression, minor transcript.

Its function is as follows. Adapter required to activate the JNK and NF-kappa-B signaling pathways through the specific recognition of 'Lys-63'-linked polyubiquitin chains by its RanBP2-type zinc finger (NZF). Acts as an adapter linking MAP3K7/TAK1 and TRAF6 to 'Lys-63'-linked polyubiquitin chains. The RanBP2-type zinc finger (NZF) specifically recognizes Lys-63'-linked polyubiquitin chains unanchored or anchored to the substrate proteins such as RIPK1/RIP1 and RIPK2: this acts as a scaffold to organize a large signaling complex to promote autophosphorylation of MAP3K7/TAK1, and subsequent activation of I-kappa-B-kinase (IKK) core complex by MAP3K7/TAK1. May be an oncogenic factor. This is TGF-beta-activated kinase 1 and MAP3K7-binding protein 3 from Homo sapiens (Human).